A 195-amino-acid polypeptide reads, in one-letter code: ATP-dependent Clp protease proteolytic subunit (195 aa).

Residue S102 is the Nucleophile of the active site. The active site involves H125.

It belongs to the peptidase S14 family. As to quaternary structure, component of the chloroplastic Clp protease core complex.

It is found in the plastid. The protein localises to the chloroplast stroma. The enzyme catalyses Hydrolysis of proteins to small peptides in the presence of ATP and magnesium. alpha-casein is the usual test substrate. In the absence of ATP, only oligopeptides shorter than five residues are hydrolyzed (such as succinyl-Leu-Tyr-|-NHMec, and Leu-Tyr-Leu-|-Tyr-Trp, in which cleavage of the -Tyr-|-Leu- and -Tyr-|-Trp bonds also occurs).. Cleaves peptides in various proteins in a process that requires ATP hydrolysis. Has a chymotrypsin-like activity. Plays a major role in the degradation of misfolded proteins. In Phaseolus vulgaris (Kidney bean), this protein is ATP-dependent Clp protease proteolytic subunit.